A 66-amino-acid polypeptide reads, in one-letter code: Cytochrome b-c1 complex subunit 9, mitochondrial (66 aa).

Residues 2 to 17 (SFSSLYKTFFKRNAVF) lie on the Mitochondrial matrix side of the membrane. The helical transmembrane segment at 18-43 (VGTIFAGAFVFQTVFDTAITSWYENH) threads the bilayer. The Mitochondrial intermembrane portion of the chain corresponds to 44–66 (NKGKLWKDVKARIAAGDGDDDDE).

The protein belongs to the UQCR10/QCR9 family. As to quaternary structure, component of the ubiquinol-cytochrome c oxidoreductase (cytochrome b-c1 complex, complex III, CIII), a multisubunit enzyme composed of 10 subunits. The complex is composed of 3 respiratory subunits cytochrome b (COB), cytochrome c1 (CYT1) and Rieske protein (RIP1), 2 core protein subunits COR1 and QCR2, and 5 low-molecular weight protein subunits QCR6, QCR7, QCR8, QCR9 and QCR10. The complex exists as an obligatory dimer and forms supercomplexes (SCs) in the inner mitochondrial membrane with a monomer or a dimer of cytochrome c oxidase (complex IV, CIV), resulting in 2 different assemblies (supercomplexes III(2)IV and III(2)IV(2)). Interacts with the transmembrane segment of RIP1.

It is found in the mitochondrion inner membrane. In terms of biological role, component of the ubiquinol-cytochrome c oxidoreductase, a multisubunit transmembrane complex that is part of the mitochondrial electron transport chain which drives oxidative phosphorylation. The respiratory chain contains 3 multisubunit complexes succinate dehydrogenase (complex II, CII), ubiquinol-cytochrome c oxidoreductase (cytochrome b-c1 complex, complex III, CIII) and cytochrome c oxidase (complex IV, CIV), that cooperate to transfer electrons derived from NADH and succinate to molecular oxygen, creating an electrochemical gradient over the inner membrane that drives transmembrane transport and the ATP synthase. The cytochrome b-c1 complex catalyzes electron transfer from ubiquinol to cytochrome c, linking this redox reaction to translocation of protons across the mitochondrial inner membrane, with protons being carried across the membrane as hydrogens on the quinol. In the process called Q cycle, 2 protons are consumed from the matrix, 4 protons are released into the intermembrane space and 2 electrons are passed to cytochrome c. The protein is Cytochrome b-c1 complex subunit 9, mitochondrial (QCR9) of Saccharomyces cerevisiae (strain ATCC 204508 / S288c) (Baker's yeast).